We begin with the raw amino-acid sequence, 114 residues long: uncharacterized protein (114 aa).

Glycine 2 carries the N-myristoyl glycine; by host lipid modification. The next 2 helical transmembrane spans lie at 11–31 (FGLI…KDLL) and 44–64 (GLMW…LVAI). The disordered stretch occupies residues 73 to 114 (VNKDSKDPKDKSIEFDDSPIRDGSSGTPDNSNEPTDLSVETS). The segment covering 75-92 (KDSKDPKDKSIEFDDSPI) has biased composition (basic and acidic residues). The span at 96 to 114 (SSGTPDNSNEPTDLSVETS) shows a compositional bias: polar residues.

It is found in the membrane. This is an uncharacterized protein from Acanthamoeba polyphaga (Amoeba).